We begin with the raw amino-acid sequence, 311 residues long: MEKEFVFGHQNPDTDAIGTAIAFSYLQNKLGYNTEAVALGEPNDETAYALKKFGFEAPRVIKEAAPEVDSVMLVDHNEPQQSVSDIDKVKVTHVVDHHRIMNFNTADPLYYRAEPVGCTSTIVWKMFNENDIEIPEKIAGIMLSAIISDTLLLKSPTTTDDDKEAVEALAKIAGVDYKDYGLAMLKAGTNINDKSEEELIDLDAKSFELNGHNVRVAQINVVDLPEALERKDAFLKAMEKASNDNDYDMFMLLITNILDSDSEALVVGSDETKSFFEKAFDKKLDDSEVKLPGVVSRKKQVVPPLTDAFNA.

Mn(2+) is bound by residues H9, D13, D15, D75, H97, and D149.

Belongs to the PPase class C family. Mn(2+) serves as cofactor.

It localises to the cytoplasm. The catalysed reaction is diphosphate + H2O = 2 phosphate + H(+). The sequence is that of Probable manganese-dependent inorganic pyrophosphatase from Lactobacillus acidophilus (strain ATCC 700396 / NCK56 / N2 / NCFM).